Here is a 230-residue protein sequence, read N- to C-terminus: Ribonuclease 3 (230 aa).

The 134-residue stretch at 1–134 (MKQLEELLST…FLGALLLDKG (134 aa)) folds into the RNase III domain. Glu-47 provides a ligand contact to Mg(2+). Asp-51 is a catalytic residue. 2 residues coordinate Mg(2+): Asp-120 and Glu-123. The active site involves Glu-123. The 70-residue stretch at 160 to 229 (DYKTCLQEFL…AKNALAQLSE (70 aa)) folds into the DRBM domain.

This sequence belongs to the ribonuclease III family. In terms of assembly, homodimer. It depends on Mg(2+) as a cofactor.

The protein localises to the cytoplasm. The catalysed reaction is Endonucleolytic cleavage to 5'-phosphomonoester.. Digests double-stranded RNA. Involved in the processing of primary rRNA transcript to yield the immediate precursors to the large and small rRNAs (23S and 16S). Processes some mRNAs, and tRNAs when they are encoded in the rRNA operon. Processes pre-crRNA and tracrRNA of type II CRISPR loci if present in the organism. This chain is Ribonuclease 3, found in Streptococcus pyogenes serotype M28 (strain MGAS6180).